Here is a 422-residue protein sequence, read N- to C-terminus: 26S proteasome non-ATPase regulatory subunit 11 (422 aa).

Position 2 is an N-acetylalanine (alanine 2). Residues serine 14 and serine 23 each carry the phosphoserine modification. Residues 224–392 (DWKTAYSYFY…GVLIIFDEPP (169 aa)) form the PCI domain. Lysine 274 participates in a covalent cross-link: Glycyl lysine isopeptide (Lys-Gly) (interchain with G-Cter in SUMO2).

This sequence belongs to the proteasome subunit S9 family. In terms of assembly, component of the 19S proteasome regulatory particle complex. The 26S proteasome consists of a 20S core particle (CP) and two 19S regulatory subunits (RP). The regulatory particle is made of a lid composed of 9 subunits including PSMD11, a base containing 6 ATPases and few additional components.

In terms of biological role, component of the 26S proteasome, a multiprotein complex involved in the ATP-dependent degradation of ubiquitinated proteins. This complex plays a key role in the maintenance of protein homeostasis by removing misfolded or damaged proteins, which could impair cellular functions, and by removing proteins whose functions are no longer required. Therefore, the proteasome participates in numerous cellular processes, including cell cycle progression, apoptosis, or DNA damage repair. In the complex, PSMD11 is required for proteasome assembly. Plays a key role in increased proteasome activity in embryonic stem cells (ESCs): its high expression in ESCs promotes enhanced assembly of the 26S proteasome, followed by higher proteasome activity. The protein is 26S proteasome non-ATPase regulatory subunit 11 (Psmd11) of Mus musculus (Mouse).